Reading from the N-terminus, the 956-residue chain is Calsyntenin-3 (956 aa).

The first 19 residues, 1 to 19, serve as a signal peptide directing secretion; it reads MTLLLLPLLLASLLASCSC. Residues 20–847 lie on the Extracellular side of the membrane; the sequence is NKANKHKPWI…SHRNSMIPSA (828 aa). Cadherin domains are found at residues 29-145 and 146-246; these read IEAE…APVF and VERL…KPSW. N-linked (GlcNAc...) asparagine glycosylation is found at N299, N327, N347, N507, and N740. Residues 848–868 form a helical membrane-spanning segment; that stretch reads ATLIIVVCVGFLVLMVVLGLV. Residues 869-956 are Cytoplasmic-facing; that stretch reads RIHSLHRRVS…RIIETPPHRY (88 aa). Residues 917–956 are disordered; it reads ACVTGAVGGQQEDEDSSDSEVADSPSSDERRIIETPPHRY. The span at 927–937 shows a compositional bias: acidic residues; it reads QEDEDSSDSEV. A compositionally biased stretch (basic and acidic residues) spans 943–956; it reads SDERRIIETPPHRY.

It belongs to the calsyntenin family. Interacts (via cadherin domains) with both alpha and beta isoforms of neurexins (NRXN1, NRXN2 and NRXN3). Directly interacts with APBA2. Forms a tripartite complex with APBA2 and APP. Interacts with low affinity with KLC1. Interacts with SLC23A2/SVCT2. Post-translationally, proteolytically processed under normal cellular conditions. A primary zeta-cleavage generates a large extracellular (soluble) N-terminal domain (sAlc) and a short C-terminal transmembrane fragment (CTF1). A secondary cleavage catalyzed by gamma-secretase within the transmembrane domain releases the beta-Alc-beta chain in the extracellular milieu and produces an intracellular fragment (AlcICD). This processing is strongly suppressed in the tripartite complex formed with APBA2 and APP, which seems to prevent the association with gamma-secretase.

The protein resides in the postsynaptic cell membrane. Its subcellular location is the endoplasmic reticulum membrane. The protein localises to the golgi apparatus membrane. It is found in the cell projection. It localises to the dendrite. Functionally, postsynaptic adhesion molecule that binds to presynaptic neurexins to mediate both excitatory and inhibitory synapse formation. Promotes synapse development by acting as a cell adhesion molecule at the postsynaptic membrane, which associates with both neurexin-alpha and neurexin-beta proteins at the presynaptic membrane. Regulates the balance between excitatory and inhibitory synapses by inhibiting formation of excitatory parallel-fiber synapses and promoting formation of inhibitory synapses in the same neuron. May also be involved in ascorbate (vitamin C) uptake via its interaction with SLC23A2/SVCT2. Complex formation with APBA2 and APP, stabilizes APP metabolism and enhances APBA2-mediated suppression of beta-APP40 secretion, due to the retardation of intracellular APP maturation. The chain is Calsyntenin-3 (CLSTN3) from Pongo abelii (Sumatran orangutan).